The following is a 141-amino-acid chain: Protein stum homolog (141 aa).

The residue at position 26 (S26) is a Phosphoserine. A run of 2 helical transmembrane segments spans residues F51–V71 and R87–A107.

The protein belongs to the SPEC3 family. Stum subfamily.

It is found in the membrane. The sequence is that of Protein stum homolog from Mus musculus (Mouse).